The chain runs to 1170 residues: NPC intracellular sterol transporter 1-related protein 1 (1170 aa).

Positions 1–19 (MNVLWIIALVGQLMRLVQG) are cleaved as a signal peptide. Intrachain disulfides connect C23–C75, C29–C41, C64–C110, C76–C114, C98–C230, C101–C156, C223–C235, and C232–C239. 3 N-linked (GlcNAc...) asparagine glycosylation sites follow: N123, N145, and N178. Residues 260 to 280 (LSVLIFYTICALFAFMWYYLC) traverse the membrane as a helical segment. N314 is a glycosylation site (N-linked (GlcNAc...) asparagine). Residues 341 to 361 (ILITTVFSIFVFSFIIFQYAT) traverse the membrane as a helical segment. N-linked (GlcNAc...) asparagine glycosylation occurs at N401. Intrachain disulfides connect C438-C447 and C473-C480. Residue N513 is glycosylated (N-linked (GlcNAc...) asparagine). A run of 6 helical transmembrane segments spans residues 556-576 (NDIS…TWAL), 585-605 (LLLG…AAGF), 616-636 (IIAE…IFLI), 667-687 (ILMS…VTMP), 698-718 (VSVI…LSLY), and 752-772 (IIII…EIQF). Positions 557-717 (DISTVAISYL…LTAYVSILSL (161 aa)) constitute an SSD domain. 4 disulfide bridges follow: C822-C828, C868-C925, C869-C891, and C879-C888. N-linked (GlcNAc...) asparagine glycans are attached at residues N900 and N940. The next 5 membrane-spanning stretches (helical) occupy residues 1000-1020 (LTLK…SVFL), 1027-1047 (FLLA…MALL), 1054-1074 (VSLV…VHIV), 1099-1119 (IGES…CVLA), and 1133-1153 (MWFT…PALL).

Belongs to the patched family.

The protein resides in the vacuole membrane. In terms of biological role, involved in sphingolipid trafficking. May recycle sphingolipids between cellular membranous compartments. The chain is NPC intracellular sterol transporter 1-related protein 1 from Saccharomyces cerevisiae (strain ATCC 204508 / S288c) (Baker's yeast).